Consider the following 221-residue polypeptide: Molybdenum cofactor guanylyltransferase (221 aa).

Residues I18 to G20, K35, N63, D81, and D112 contribute to the GTP site. A Mg(2+)-binding site is contributed by D112.

The protein belongs to the MobA family. As to quaternary structure, monomer. Mg(2+) serves as cofactor.

The protein localises to the cytoplasm. The enzyme catalyses Mo-molybdopterin + GTP + H(+) = Mo-molybdopterin guanine dinucleotide + diphosphate. Its function is as follows. Transfers a GMP moiety from GTP to Mo-molybdopterin (Mo-MPT) cofactor (Moco or molybdenum cofactor) to form Mo-molybdopterin guanine dinucleotide (Mo-MGD) cofactor. This is Molybdenum cofactor guanylyltransferase from Brucella abortus (strain S19).